The sequence spans 406 residues: Multifunctional CCA protein (406 aa).

G8 and R11 together coordinate ATP. CTP is bound by residues G8 and R11. Residues D21 and D23 each coordinate Mg(2+). ATP contacts are provided by R91, R137, and R140. CTP-binding residues include R91, R137, and R140. Residues 228-329 (TGIHTLMVAQ…IKILNKFDVW (102 aa)) enclose the HD domain.

The protein belongs to the tRNA nucleotidyltransferase/poly(A) polymerase family. Bacterial CCA-adding enzyme type 1 subfamily. In terms of assembly, monomer. Can also form homodimers and oligomers. The cofactor is Mg(2+). Requires Ni(2+) as cofactor.

It carries out the reaction a tRNA precursor + 2 CTP + ATP = a tRNA with a 3' CCA end + 3 diphosphate. The enzyme catalyses a tRNA with a 3' CCA end + 2 CTP + ATP = a tRNA with a 3' CCACCA end + 3 diphosphate. Catalyzes the addition and repair of the essential 3'-terminal CCA sequence in tRNAs without using a nucleic acid template. Adds these three nucleotides in the order of C, C, and A to the tRNA nucleotide-73, using CTP and ATP as substrates and producing inorganic pyrophosphate. tRNA 3'-terminal CCA addition is required both for tRNA processing and repair. Also involved in tRNA surveillance by mediating tandem CCA addition to generate a CCACCA at the 3' terminus of unstable tRNAs. While stable tRNAs receive only 3'-terminal CCA, unstable tRNAs are marked with CCACCA and rapidly degraded. The polypeptide is Multifunctional CCA protein (Vibrio campbellii (strain ATCC BAA-1116)).